The sequence spans 94 residues: Phosphoribosyl-ATP pyrophosphatase (94 aa).

This sequence belongs to the PRA-PH family.

Its subcellular location is the cytoplasm. The catalysed reaction is 1-(5-phospho-beta-D-ribosyl)-ATP + H2O = 1-(5-phospho-beta-D-ribosyl)-5'-AMP + diphosphate + H(+). It functions in the pathway amino-acid biosynthesis; L-histidine biosynthesis; L-histidine from 5-phospho-alpha-D-ribose 1-diphosphate: step 2/9. This is Phosphoribosyl-ATP pyrophosphatase from Saccharolobus islandicus (strain M.16.27) (Sulfolobus islandicus).